A 291-amino-acid chain; its full sequence is Undecaprenyl-diphosphatase (291 aa).

The next 8 helical transmembrane spans lie at 1–21 (MFII…LTEF), 48–68 (SAFT…AWVF), 102–122 (LHVL…DDFI), 126–146 (LFSV…MIIA), 162–182 (ISYF…WPGF), 203–223 (SDFT…LSLL), 231–251 (IADI…GLIA), and 267–287 (FAIY…GFGI).

This sequence belongs to the UppP family.

The protein localises to the cell membrane. The enzyme catalyses di-trans,octa-cis-undecaprenyl diphosphate + H2O = di-trans,octa-cis-undecaprenyl phosphate + phosphate + H(+). Catalyzes the dephosphorylation of undecaprenyl diphosphate (UPP). Confers resistance to bacitracin. This chain is Undecaprenyl-diphosphatase, found in Staphylococcus aureus (strain USA300).